Consider the following 376-residue polypeptide: Aspartate-semialdehyde dehydrogenase (376 aa).

Residues 11–14 (RGMV), 38–39 (TS), and Gln74 each bind NADP(+). Arg103 provides a ligand contact to phosphate. The active-site Acyl-thioester intermediate is the Cys136. Gln163 contributes to the substrate binding site. Residues 166–167 (SG) and Pro194 contribute to the NADP(+) site. Glu242 is a substrate binding site. Lys245 provides a ligand contact to phosphate. Arg273 is a binding site for substrate. Catalysis depends on His280, which acts as the Proton acceptor. Gln356 lines the NADP(+) pocket.

It belongs to the aspartate-semialdehyde dehydrogenase family. Homodimer.

It carries out the reaction L-aspartate 4-semialdehyde + phosphate + NADP(+) = 4-phospho-L-aspartate + NADPH + H(+). It functions in the pathway amino-acid biosynthesis; L-lysine biosynthesis via DAP pathway; (S)-tetrahydrodipicolinate from L-aspartate: step 2/4. Its pathway is amino-acid biosynthesis; L-methionine biosynthesis via de novo pathway; L-homoserine from L-aspartate: step 2/3. The protein operates within amino-acid biosynthesis; L-threonine biosynthesis; L-threonine from L-aspartate: step 2/5. Its function is as follows. Catalyzes the NADPH-dependent formation of L-aspartate-semialdehyde (L-ASA) by the reductive dephosphorylation of L-aspartyl-4-phosphate. This Bordetella pertussis (strain Tohama I / ATCC BAA-589 / NCTC 13251) protein is Aspartate-semialdehyde dehydrogenase.